A 234-amino-acid polypeptide reads, in one-letter code: MNSTPDAFQRPAIRALTPLEARVLGVLIEKQHTVPDTYPLSLNALTAGCNQKTARSPVMNVSEAEVLTSIDGLKRLSLASEGSSSRVPRFEHNMNRVLGIPSQAAALLTMLLLRGPQTAAELRLNTARLHGFADISSVEAFLDELAARAPALVVKLPRAPGERESRWMHLLCGDVALDEALAHGVQEDAVPPSEFEALKAEQKALTAELARLRAFVEYMANELGIDADKFTRES.

The protein belongs to the UPF0502 family.

The sequence is that of UPF0502 protein BTH_II0990 from Burkholderia thailandensis (strain ATCC 700388 / DSM 13276 / CCUG 48851 / CIP 106301 / E264).